The primary structure comprises 504 residues: Acetylcholine receptor subunit epsilon (504 aa).

The signal sequence occupies residues 1–19 (MESGVRILSLLILLHNSLA). The Extracellular segment spans residues 20-240 (SESEESRLIK…IVFNLIIQRK (221 aa)). 2 N-linked (GlcNAc...) asparagine glycosylation sites follow: N88 and N161. Residues C148 and C162 are joined by a disulfide bond. The chain crosses the membrane as a helical span at residues 241–265 (PLFYIINIIVPCVLISFLVVLVYFL). The Cytoplasmic portion of the chain corresponds to 266–273 (PAKAGGQK). Residues 274–292 (CTVSISVLLAQTVFLFLIA) traverse the membrane as a helical segment. Over 293–307 (QMVPETSLSVPLIGK) the chain is Extracellular. The helical transmembrane segment at 308–329 (YLMFVMFVSTLIVLSCVIVLNV) threads the bilayer. At 330 to 473 (SLRSPSTHNL…WILIGKVLDV (144 aa)) the chain is on the cytoplasmic side. The chain crosses the membrane as a helical span at residues 474-497 (LCFWVALPLFVLGTLAIFLMGHFN). At 498–504 (TAPEHPF) the chain is on the extracellular side.

The protein belongs to the ligand-gated ion channel (TC 1.A.9) family. Acetylcholine receptor (TC 1.A.9.1) subfamily. Epsilon/CHRNE sub-subfamily. As to quaternary structure, pentamer of two alpha chains, and one each of the beta, delta, and gamma (in immature muscle) or epsilon (in mature muscle) chains.

Its subcellular location is the postsynaptic cell membrane. It localises to the cell membrane. It catalyses the reaction K(+)(in) = K(+)(out). The enzyme catalyses Na(+)(in) = Na(+)(out). In terms of biological role, after binding acetylcholine, the AChR responds by an extensive change in conformation that affects all subunits and leads to opening of an ion-conducting channel across the plasma membrane. This chain is Acetylcholine receptor subunit epsilon (chrne), found in Xenopus laevis (African clawed frog).